The following is a 227-amino-acid chain: Cytochrome c oxidase subunit 2 (227 aa).

Topologically, residues 1 to 14 are mitochondrial intermembrane; sequence MAYPFQLGLQDATS. A helical transmembrane segment spans residues 15-45; that stretch reads PIMEELTNFHDHTLMIVFLISSLVLYIISLM. Over 46-59 the chain is Mitochondrial matrix; sequence LTTKLTHTSTMDAQ. A helical transmembrane segment spans residues 60–87; it reads EVETIWTILPAVILILIALPSLRILYMM. Residues 88–227 lie on the Mitochondrial intermembrane side of the membrane; it reads DEINNPALTV…HFENWSASMI (140 aa). Cu cation is bound by residues His-161, Cys-196, Glu-198, Cys-200, His-204, and Met-207. Glu-198 contacts Mg(2+).

It belongs to the cytochrome c oxidase subunit 2 family. In terms of assembly, component of the cytochrome c oxidase (complex IV, CIV), a multisubunit enzyme composed of 14 subunits. The complex is composed of a catalytic core of 3 subunits MT-CO1, MT-CO2 and MT-CO3, encoded in the mitochondrial DNA, and 11 supernumerary subunits COX4I, COX5A, COX5B, COX6A, COX6B, COX6C, COX7A, COX7B, COX7C, COX8 and NDUFA4, which are encoded in the nuclear genome. The complex exists as a monomer or a dimer and forms supercomplexes (SCs) in the inner mitochondrial membrane with NADH-ubiquinone oxidoreductase (complex I, CI) and ubiquinol-cytochrome c oxidoreductase (cytochrome b-c1 complex, complex III, CIII), resulting in different assemblies (supercomplex SCI(1)III(2)IV(1) and megacomplex MCI(2)III(2)IV(2)). Found in a complex with TMEM177, COA6, COX18, COX20, SCO1 and SCO2. Interacts with TMEM177 in a COX20-dependent manner. Interacts with COX20. Interacts with COX16. It depends on Cu cation as a cofactor.

It localises to the mitochondrion inner membrane. The catalysed reaction is 4 Fe(II)-[cytochrome c] + O2 + 8 H(+)(in) = 4 Fe(III)-[cytochrome c] + 2 H2O + 4 H(+)(out). Component of the cytochrome c oxidase, the last enzyme in the mitochondrial electron transport chain which drives oxidative phosphorylation. The respiratory chain contains 3 multisubunit complexes succinate dehydrogenase (complex II, CII), ubiquinol-cytochrome c oxidoreductase (cytochrome b-c1 complex, complex III, CIII) and cytochrome c oxidase (complex IV, CIV), that cooperate to transfer electrons derived from NADH and succinate to molecular oxygen, creating an electrochemical gradient over the inner membrane that drives transmembrane transport and the ATP synthase. Cytochrome c oxidase is the component of the respiratory chain that catalyzes the reduction of oxygen to water. Electrons originating from reduced cytochrome c in the intermembrane space (IMS) are transferred via the dinuclear copper A center (CU(A)) of subunit 2 and heme A of subunit 1 to the active site in subunit 1, a binuclear center (BNC) formed by heme A3 and copper B (CU(B)). The BNC reduces molecular oxygen to 2 water molecules using 4 electrons from cytochrome c in the IMS and 4 protons from the mitochondrial matrix. The sequence is that of Cytochrome c oxidase subunit 2 (MT-CO2) from Berylmys bowersi (Bower's white-toothed rat).